The chain runs to 398 residues: Streptopain (398 aa).

A signal peptide spans 1-27 (MNKKKLGVRLLSLLALGGFVLANPVFA). The propeptide occupies 28-145 (DQNFARNEKE…TTYAGTAEIK (118 aa)). Catalysis depends on Cys192, which acts as the Nucleophile. Cys192 carries the cysteine methyl disulfide; in zymogen form modification. Positions 282 and 339 each coordinate a protein. The active-site Proton acceptor is the His340. Residues 368 to 390 (RLDALNPSALGTGGGAGGFNGYQ) form a C-terminal active site loop region.

Belongs to the peptidase C10 family. In terms of assembly, monomer. In terms of processing, the mature protease is derived from the precursor sequence by cleavage, either in cis via an autocatalytic mechanism, or in trans by mature SpeB or host proteases (trypsin, plasmin or subtilisin). Maturation can involve a number of protein cleavage intermediates. Mature SpeB probably plays the most important role in protein maturation in physiological conditions. Methylthiolation at Cys-192 of the inactive zymogen form is probably involved in the mechanism of secretion of the proteinase into the culture fluid.

The protein resides in the secreted. It is found in the host extracellular space. The protein localises to the host cytoplasm. The enzyme catalyses Preferential cleavage with hydrophobic residues at P2, P1 and P1'.. Its activity is regulated as follows. Synthesized as an inactive zymogen to protect the intracellular components of the bacteria from proteolytic activity during protein production. Once secreted into the extracellular milieu, cleaved into the active protease: maturation can be mediated in cis by autocatalytic cleavage, or in trans by mature SpeB or host proteases. Protease activity is strongly inhibited by zinc and copper, which prevent its maturation into an active protease: inhibition by metal ions may be required to prevent proteolysis of streptococcal proteins. Its function is as follows. Cysteine protease that acts as a key streptococcal virulence factor by cleaving host proteins involved in immune response. Triggers inflammation by mediating cleavage of host proteins, which can both promote host pathogenesis by triggering sterile inflammation and/or restrict streptococcal infection, depending on host immune statue and infection site. Cleaves host gasdermin-A (GSDMA) in epithelial cells, promoting GSDMA activation and formation of gasdermin pores, triggering pyroptosis. Pyroptosis triggers the elimination of the infected skin cell, depriving the pathogen of its protective niche, while inducing an inflammatory response. This ultimately prevents bacterial penetration of the epithelial barrier and a subsequent systemic dissemination of the pathogen. Also mediates cleavage of the cytokine precursor interleukin-1 beta (IL1B) to its mature form, resulting in inflammation and septic shock. SpeB-mediated maturation of IL1B plays a dual role depending on infection site: while IL1B inflammatory response prevents bacterial growth during invasive skin infections, it promotes streptococcal infection of the nasopharynx by disrupting colonization resistance mediated by the microbiota. Inhibits host autophagy be catalyzing cleavage and inactivation of key autophagy factors, such as CALCOCO2, NBR1 and SQSTM1. Cleaves and inhibits a number of complement factors, such as C2, C3-beta chain of C3, C4, C5 or SERPING1, thereby promoting evasion of host immunity. May also impair adaptive immunity by catalyzing cleavage and degradation of host immunoglobulins to promote immune system evasion; the relevance of this activity is however unsure in vivo. Catalyzes maturation and release of the peptide hormone bradykinin from the precursor Kininogen-1 (KNG1) to produce hypotension during septic shock. Also involved in bacterial translocation across the host epithelial barrier by mediating cleavage and degradation of host epithelial junction proteins, such as CDH1 and OCLN. Additionally, has been involved in degradation of fibronectin and vitronectin, two host extracellular matrix proteins involved in tissue integrity. Also able to catalyze cleavage and degradation of streptococcal proteins, such as C5a peptidase, EndoS or SmeZ. Degradation of streptococcal proteins is however strictly regulated to preserve integrity of other virulence factors. This is Streptopain from Streptococcus pyogenes serotype M1.